Reading from the N-terminus, the 363-residue chain is 2,5-diketocamphane 1,2-monooxygenase 1 (363 aa).

FMN is bound by residues Met-74 and 186-194 (TGLTKNSSS).

Belongs to the bacterial luciferase oxidoreductase family. In terms of assembly, homodimer. Likely forms a loose transient complex with a P.putida flavin reductase that provides the required FMNH(2) to the enzyme.

The enzyme catalyses (1R,4R)-bornane-2,5-dione + FMNH2 + O2 = (1R,4R)-5-oxo-1,2-campholide + FMN + H2O + H(+). It participates in terpene metabolism; (R)-camphor degradation. Involved in the degradation and assimilation of (+)-camphor, which allows P.putida strain NCIMB 10007 to grow on this enantiomer of camphor as the sole carbon source. Catalyzes the FMNH(2)-dependent lactonization of 2,5-diketocamphane via a Baeyer-Villiger oxidation to produce the unstable lactone 5-oxo-1,2-campholide with (R,R) configuration, that presumably undergoes spontaneous hydrolysis to form 2-oxo-Delta(3)-4,5,5-trimethylcyclopentenylacetate. Is also able to convert (+)-camphor and norcamphor to the corresponding lactone in vitro. Shows no conversion of (-)-camphor, (+)-fenchone, (-)-fenchone, and (+)-nopinone. Acts only on bicyclic ketones; is not active towards monocyclic ketones, aromatic ketones, the aliphatic 2-decanone, 1-indanone and progesterone. In Pseudomonas putida (Arthrobacter siderocapsulatus), this protein is 2,5-diketocamphane 1,2-monooxygenase 1.